Consider the following 257-residue polypeptide: uncharacterized protein (257 aa).

The signal sequence occupies residues 1–22 (MIHSRKLRLWLYLVLLAVFIGA). A lipid anchor (N-palmitoyl cysteine) is attached at cysteine 23. A lipid anchor (S-diacylglycerol cysteine) is attached at cysteine 23.

It belongs to the staphylococcal tandem lipoprotein family.

It is found in the cell membrane. This is an uncharacterized protein from Staphylococcus aureus (strain Mu50 / ATCC 700699).